Here is a 415-residue protein sequence, read N- to C-terminus: Metal tolerance protein 5 (415 aa).

The Cytoplasmic segment spans residues 1–124 (MAAAVAGGGE…REKVARSETL (124 aa)). Residues 125–145 (AIRLSNIANMVLFAAKVYASV) form a helical membrane-spanning segment. Topologically, residues 146 to 150 (RSGSL) are vacuolar. A helical membrane pass occupies residues 151-171 (AIIASTLDSLLDLLSGFILWF). The Cytoplasmic portion of the chain corresponds to 172 to 192 (TAFSMQTPNPYRYPIGKKRMQ). Residues 193–213 (PLGILVFASVMATLGLQIILE) form a helical membrane-spanning segment. The Vacuolar segment spans residues 214 to 232 (SVRSLLSDGDEFSLTKEQE). Residues 233–253 (KWVVDIMLAVTLVKLALVLYC) form a helical membrane-spanning segment. Over 254 to 268 (RTFTNEIVKAYAQDH) the chain is Cytoplasmic. Residues 269-291 (FFDVITNMIGLVAALLATYIEGW) traverse the membrane as a helical segment. The Vacuolar segment spans residues 292 to 293 (ID). Residues 294–313 (PVGAIILAIYTIRTWSMTVL) form a helical membrane-spanning segment. Topologically, residues 314–415 (ENVHSLVGQS…RPEHALSHEK (102 aa)) are cytoplasmic.

Belongs to the cation diffusion facilitator (CDF) transporter (TC 2.A.4) family. SLC30A subfamily.

It localises to the vacuole membrane. Functionally, involved in sequestration of excess metal in the cytoplasm into vacuoles to maintain metal homeostasis. This is Metal tolerance protein 5 (MTP5) from Oryza sativa subsp. japonica (Rice).